A 543-amino-acid polypeptide reads, in one-letter code: Serine/threonine-protein kinase Chk2 (543 aa).

The interval 1 to 66 (MSRESDVEAQ…SGTLSSLETV (66 aa)) is disordered. Residues 8–22 (EAQQSHGSSACSQPH) show a composition bias toward polar residues. Low complexity predominate over residues 23 to 62 (GSVTQSQGSSSQSQGISSSSTSTMPNSSQSSHSSSGTLSS). Ser-62 is modified (phosphoserine; by PLK3). Thr-68 carries the post-translational modification Phosphothreonine; by ATM and MAP3K20. Ser-73 carries the post-translational modification Phosphoserine; by PLK3. One can recognise an FHA domain in the interval 113 to 175 (YWFGRDKSCE…NGTFVNTELV (63 aa)). The Protein kinase domain maps to 220–486 (YIMSKTLGSG…TEEALRHPWL (267 aa)). ATP is bound by residues 227-234 (GSGACGEV), Lys-249, and 302-308 (ELMEGGE). Residue Asp-347 is the Proton acceptor of the active site. Residues 351–352 (EN) and Asp-368 contribute to the ATP site. The segment at 368–394 (DFGHSKILGETSLMRTLCGTPTYLAPE) is T-loop/activation segment. Residue Ser-379 is modified to Phosphoserine; by autocatalysis. 2 positions are modified to phosphothreonine; by autocatalysis: Thr-383 and Thr-387. Ser-456 is modified (phosphoserine). The span at 506–517 (TALPQVLAQPST) shows a compositional bias: polar residues. Positions 506–538 (TALPQVLAQPSTSRKRPREGEAEGAETTKRPAV) are disordered. Positions 523–534 (REGEAEGAETTK) are enriched in basic and acidic residues.

The protein belongs to the protein kinase superfamily. CAMK Ser/Thr protein kinase family. CHK2 subfamily. Homodimer. Homodimerization is part of the activation process but the dimer may dissociate following activation. Interacts with PML. Interacts with TP53. Interacts with RB1; phosphorylates RB1. Interacts with BRCA1. Interacts (phosphorylated at Thr-68) with MDC1; requires ATM-mediated phosphorylation of CHEK2. Interacts with TP53BP1; modulates CHEK2 phosphorylation at Thr-68 in response to ionizing radiation. Interacts with CDC25A; phosphorylates CDC25A and mediates its degradation in response to ionizing radiation. Interacts with CUL1; mediates CHEK2 ubiquitination and regulation. Interacts with CDKN2AIP. Interacts (via protein kinase domain) with CCAR2 (via N-terminus). Interacts with SIRT1. Mg(2+) is required as a cofactor. Phosphorylated. Phosphorylated at Ser-73 by PLK3 in response to DNA damage, promoting phosphorylation at Thr-68 by ATM and the G2/M transition checkpoint. Phosphorylation at Thr-68 induces homodimerization. Autophosphorylates at Thr-383 and Thr-387 in the T-loop/activation segment upon dimerization to become fully active and phosphorylate its substrates like for instance CDC25C. DNA damage-induced autophosphorylation at Ser-379 induces CUL1-mediated ubiquitination and regulates the pro-apoptotic function. Phosphorylation at Ser-456 also regulates ubiquitination. Phosphorylated by PLK4. In terms of processing, ubiquitinated. CUL1-mediated ubiquitination regulates the pro-apoptotic function. Ubiquitination may also regulate protein stability. Ubiquitinated by RNF8 via 'Lys-48'-linked ubiquitination. As to expression, high expression is found in testis, spleen, colon and peripheral blood leukocytes. Low expression is found in other tissues.

The protein localises to the nucleus. It is found in the PML body. It localises to the nucleoplasm. The catalysed reaction is L-seryl-[protein] + ATP = O-phospho-L-seryl-[protein] + ADP + H(+). It carries out the reaction L-threonyl-[protein] + ATP = O-phospho-L-threonyl-[protein] + ADP + H(+). Activated through phosphorylation at Thr-68 by ATM in response to DNA double-strand breaks. Activation is modulated by several mediators including MDC1 and TP53BP1. Induces homodimerization with exchange of the T-loop/activation segment between protomers and transphosphorylation of the protomers. The autophosphorylated kinase dimer is fully active. Negatively regulated by PPM1D through dephosphorylation of Thr-68. Serine/threonine-protein kinase which is required for checkpoint-mediated cell cycle arrest, activation of DNA repair and apoptosis in response to the presence of DNA double-strand breaks. May also negatively regulate cell cycle progression during unperturbed cell cycles. Following activation, phosphorylates numerous effectors preferentially at the consensus sequence [L-X-R-X-X-S/T]. Regulates cell cycle checkpoint arrest through phosphorylation of CDC25A, CDC25B and CDC25C, inhibiting their activity. Inhibition of CDC25 phosphatase activity leads to increased inhibitory tyrosine phosphorylation of CDK-cyclin complexes and blocks cell cycle progression. May also phosphorylate NEK6 which is involved in G2/M cell cycle arrest. Regulates DNA repair through phosphorylation of BRCA2, enhancing the association of RAD51 with chromatin which promotes DNA repair by homologous recombination. Also stimulates the transcription of genes involved in DNA repair (including BRCA2) through the phosphorylation and activation of the transcription factor FOXM1. Regulates apoptosis through the phosphorylation of p53/TP53, MDM4 and PML. Phosphorylation of p53/TP53 at 'Ser-20' by CHEK2 may alleviate inhibition by MDM2, leading to accumulation of active p53/TP53. Phosphorylation of MDM4 may also reduce degradation of p53/TP53. Also controls the transcription of pro-apoptotic genes through phosphorylation of the transcription factor E2F1. Tumor suppressor, it may also have a DNA damage-independent function in mitotic spindle assembly by phosphorylating BRCA1. Its absence may be a cause of the chromosomal instability observed in some cancer cells. Promotes the CCAR2-SIRT1 association and is required for CCAR2-mediated SIRT1 inhibition. Under oxidative stress, promotes ATG7 ubiquitination by phosphorylating the E3 ubiquitin ligase TRIM32 at 'Ser-55' leading to positive regulation of the autophagosme assembly. Its function is as follows. (Microbial infection) Phosphorylates herpes simplex virus 1/HHV-1 protein ICP0 and thus activates its SUMO-targeted ubiquitin ligase activity. This is Serine/threonine-protein kinase Chk2 from Homo sapiens (Human).